Here is a 446-residue protein sequence, read N- to C-terminus: Glutamate-1-semialdehyde 2,1-aminomutase (446 aa).

Residue K278 is modified to N6-(pyridoxal phosphate)lysine.

Belongs to the class-III pyridoxal-phosphate-dependent aminotransferase family. HemL subfamily. In terms of assembly, homodimer. Pyridoxal 5'-phosphate is required as a cofactor.

The protein localises to the cytoplasm. The enzyme catalyses (S)-4-amino-5-oxopentanoate = 5-aminolevulinate. It participates in porphyrin-containing compound metabolism; protoporphyrin-IX biosynthesis; 5-aminolevulinate from L-glutamyl-tRNA(Glu): step 2/2. This is Glutamate-1-semialdehyde 2,1-aminomutase from Deinococcus geothermalis (strain DSM 11300 / CIP 105573 / AG-3a).